A 161-amino-acid polypeptide reads, in one-letter code: Lipoprotein signal peptidase (161 aa).

3 helical membrane-spanning segments follow: residues 9-29 (ISLL…WLIT), 63-83 (KMLF…IFYI), and 88-108 (FNLF…GNFI). Catalysis depends on residues D118 and D136. A helical transmembrane segment spans residues 131-151 (IFNIADSSLTIGVIFVIIALI).

The protein belongs to the peptidase A8 family.

It localises to the cell membrane. The catalysed reaction is Release of signal peptides from bacterial membrane prolipoproteins. Hydrolyzes -Xaa-Yaa-Zaa-|-(S,diacylglyceryl)Cys-, in which Xaa is hydrophobic (preferably Leu), and Yaa (Ala or Ser) and Zaa (Gly or Ala) have small, neutral side chains.. Its pathway is protein modification; lipoprotein biosynthesis (signal peptide cleavage). Functionally, this protein specifically catalyzes the removal of signal peptides from prolipoproteins. In Staphylococcus epidermidis (strain ATCC 12228 / FDA PCI 1200), this protein is Lipoprotein signal peptidase.